We begin with the raw amino-acid sequence, 362 residues long: Probable dual-specificity RNA methyltransferase RlmN (362 aa).

The Proton acceptor role is filled by E105. Positions 111–344 (HEYGNSICVT…VTIRREQGHD (234 aa)) constitute a Radical SAM core domain. Residues C118 and C349 are joined by a disulfide bond. [4Fe-4S] cluster contacts are provided by C125, C129, and C132. S-adenosyl-L-methionine is bound by residues 175–176 (GE), S207, 230–232 (SLH), and N306. Catalysis depends on C349, which acts as the S-methylcysteine intermediate.

The protein belongs to the radical SAM superfamily. RlmN family. It depends on [4Fe-4S] cluster as a cofactor.

It is found in the cytoplasm. The enzyme catalyses adenosine(2503) in 23S rRNA + 2 reduced [2Fe-2S]-[ferredoxin] + 2 S-adenosyl-L-methionine = 2-methyladenosine(2503) in 23S rRNA + 5'-deoxyadenosine + L-methionine + 2 oxidized [2Fe-2S]-[ferredoxin] + S-adenosyl-L-homocysteine. It catalyses the reaction adenosine(37) in tRNA + 2 reduced [2Fe-2S]-[ferredoxin] + 2 S-adenosyl-L-methionine = 2-methyladenosine(37) in tRNA + 5'-deoxyadenosine + L-methionine + 2 oxidized [2Fe-2S]-[ferredoxin] + S-adenosyl-L-homocysteine. In terms of biological role, specifically methylates position 2 of adenine 2503 in 23S rRNA and position 2 of adenine 37 in tRNAs. The polypeptide is Probable dual-specificity RNA methyltransferase RlmN (Bacillus anthracis (strain CDC 684 / NRRL 3495)).